A 232-amino-acid chain; its full sequence is Secreted LysM effector Mg3LysM (232 aa).

The signal sequence occupies residues 1–16 (MQNIFLAATLLGAAFA). Residues 47-91 (TNYTVKAGDTLGAIAKQYNSGVCDIAKVNGIDNPDYIKPDQVLSI) form the LysM 1 domain. Asn-48, Asn-100, Asn-138, Asn-195, Asn-209, and Asn-227 each carry an N-linked (GlcNAc...) asparagine glycan. 2 consecutive LysM domains span residues 120-165 (STYT…VINT) and 177-221 (GTYV…IIIL).

The protein belongs to the secreted LysM effector family.

Its function is as follows. Secreted effector that enables the plant pathogenic fungus to manipulate host defenses for successful infection. Binds chitin fragments and blocks the activation of chitin-induced plant defense responses. Protects fungal hyphae against hydrolytic plant enzymes. The chain is Secreted LysM effector Mg3LysM from Zymoseptoria tritici (strain CBS 115943 / IPO323) (Speckled leaf blotch fungus).